Here is a 99-residue protein sequence, read N- to C-terminus: High mobility group nucleosome-binding domain-containing protein 3 (99 aa).

Composition is skewed to basic and acidic residues over residues 1–25 (MPKRKSPENTEDKDGSKVTKQEPTR), 39–53 (PEPKPRKTSAKKEPG), and 62–72 (GKKEEKQEAGK). The tract at residues 1–99 (MPKRKSPENT…KTESVDNEGE (99 aa)) is disordered. Ser6 carries the post-translational modification Phosphoserine. A Phosphothreonine modification is found at Thr10. Phosphoserine occurs at positions 78 and 93. Residues 81–93 (GETKAEEAQKTES) show a composition bias toward basic and acidic residues.

The protein belongs to the HMGN family. As to quaternary structure, interacts with the ligand binding domain of the thyroid receptor (TR) (in vitro). Requires the presence of thyroid hormone for its interaction. Interacts with transcriptional regulator SEHBP. Interacts with nucleosomes.

It is found in the nucleus. In terms of biological role, binds to nucleosomes, regulating chromatin structure and consequently, chromatin-dependent processes such as transcription, DNA replication and DNA repair. Affects both insulin and glucagon levels and modulates the expression of pancreatic genes involved in insulin secretion. Regulates the expression of the glucose transporter SLC2A2 by binding specifically to its promoter region and recruiting PDX1 and additional transcription factors. Regulates the expression of SLC6A9, a glycine transporter which regulates the glycine concentration in synaptic junctions in the central nervous system, by binding to its transcription start site. May play a role in ocular development and astrocyte function. This chain is High mobility group nucleosome-binding domain-containing protein 3 (HMGN3), found in Pongo abelii (Sumatran orangutan).